The following is a 453-amino-acid chain: Ribosomal protein uS12 methylthiotransferase RimO (453 aa).

The 116-residue stretch at P5 to P120 folds into the MTTase N-terminal domain. The [4Fe-4S] cluster site is built by C14, C50, C79, C151, C155, and C158. Residues L137–R382 form the Radical SAM core domain. Positions Q385–V453 constitute a TRAM domain.

It belongs to the methylthiotransferase family. RimO subfamily. [4Fe-4S] cluster is required as a cofactor.

It localises to the cytoplasm. The catalysed reaction is L-aspartate(89)-[ribosomal protein uS12]-hydrogen + (sulfur carrier)-SH + AH2 + 2 S-adenosyl-L-methionine = 3-methylsulfanyl-L-aspartate(89)-[ribosomal protein uS12]-hydrogen + (sulfur carrier)-H + 5'-deoxyadenosine + L-methionine + A + S-adenosyl-L-homocysteine + 2 H(+). Its function is as follows. Catalyzes the methylthiolation of an aspartic acid residue of ribosomal protein uS12. The polypeptide is Ribosomal protein uS12 methylthiotransferase RimO (Burkholderia vietnamiensis (strain G4 / LMG 22486) (Burkholderia cepacia (strain R1808))).